Consider the following 198-residue polypeptide: Proteasome subunit beta 2 (198 aa).

The propeptide at 1–4 (MVLA) is removed in mature form; by autocatalysis. T5 (nucleophile) is an active-site residue.

Belongs to the peptidase T1B family. The 20S proteasome core is composed of 14 alpha and 14 beta subunits that assemble into four stacked heptameric rings, resulting in a barrel-shaped structure. The two inner rings, each composed of seven catalytic beta subunits, are sandwiched by two outer rings, each composed of seven alpha subunits. The catalytic chamber with the active sites is on the inside of the barrel. Has a gated structure, the ends of the cylinder being occluded by the N-termini of the alpha-subunits. Is capped at one or both ends by the proteasome regulatory ATPase, PAN.

The protein localises to the cytoplasm. The enzyme catalyses Cleavage of peptide bonds with very broad specificity.. The formation of the proteasomal ATPase PAN-20S proteasome complex, via the docking of the C-termini of PAN into the intersubunit pockets in the alpha-rings, triggers opening of the gate for substrate entry. Interconversion between the open-gate and close-gate conformations leads to a dynamic regulation of the 20S proteasome proteolysis activity. In terms of biological role, component of the proteasome core, a large protease complex with broad specificity involved in protein degradation. The protein is Proteasome subunit beta 2 of Korarchaeum cryptofilum (strain OPF8).